We begin with the raw amino-acid sequence, 80 residues long: Metallothionein-like protein type 2 (80 aa).

Belongs to the metallothionein superfamily. Type 15 family.

In terms of biological role, metallothioneins have a high content of cysteine residues that bind various heavy metals. This is Metallothionein-like protein type 2 (MTI) from Ricinus communis (Castor bean).